The sequence spans 160 residues: MKVTLLLLLIAVLLLLLIFMKVCKQKCIEGIEFEIKNNVKKSLDKKIKDKKSVSKIVDKYTTGLQNCYNVKNVSFDQFIDPESTNNLELKKCVGSLINVGVMKYWSDNLESKTIDNLNETMECMTKLPLNSNTTTRFPLRAAECAGERSWWKPDIFGTRN.

An N-terminal signal peptide occupies residues 1–25 (MKVTLLLLLIAVLLLLLIFMKVCKQ).

This is an uncharacterized protein from Invertebrate iridescent virus 6 (IIV-6).